A 258-amino-acid chain; its full sequence is Tritrans,polycis-undecaprenyl-diphosphate synthase (geranylgeranyl-diphosphate specific) (258 aa).

D37 is a catalytic residue. Position 37 (D37) interacts with Mg(2+). Substrate contacts are provided by residues 38 to 41 (GNRR), H54, and 82 to 84 (STE). Catalysis depends on N85, which acts as the Proton acceptor. Residues F86, R88, R207, and 213-215 (RIS) contribute to the substrate site. Position 226 (E226) interacts with Mg(2+).

Belongs to the UPP synthase family. In terms of assembly, homodimer. Requires Mg(2+) as cofactor.

It catalyses the reaction geranylgeranyl diphosphate + 7 isopentenyl diphosphate = tri-trans,hepta-cis-undecaprenyl diphosphate + 7 diphosphate. Catalyzes the sequential condensation of isopentenyl diphosphate (IPP) with geranylgeranyl diphosphate (GGPP) to yield (2Z,6Z,10Z,14Z,18Z,22Z,26Z,30E,34E,38E)-undecaprenyl diphosphate (tritrans,heptacis-UPP). It is probably the precursor of glycosyl carrier lipids. In Thermoplasma acidophilum (strain ATCC 25905 / DSM 1728 / JCM 9062 / NBRC 15155 / AMRC-C165), this protein is Tritrans,polycis-undecaprenyl-diphosphate synthase (geranylgeranyl-diphosphate specific).